The following is a 483-amino-acid chain: Glutamyl-tRNA(Gln) amidotransferase subunit A (483 aa).

Catalysis depends on charge relay system residues Lys77 and Ser152. Ser176 functions as the Acyl-ester intermediate in the catalytic mechanism.

This sequence belongs to the amidase family. GatA subfamily. Heterotrimer of A, B and C subunits.

It catalyses the reaction L-glutamyl-tRNA(Gln) + L-glutamine + ATP + H2O = L-glutaminyl-tRNA(Gln) + L-glutamate + ADP + phosphate + H(+). Its function is as follows. Allows the formation of correctly charged Gln-tRNA(Gln) through the transamidation of misacylated Glu-tRNA(Gln) in organisms which lack glutaminyl-tRNA synthetase. The reaction takes place in the presence of glutamine and ATP through an activated gamma-phospho-Glu-tRNA(Gln). This Listeria monocytogenes serovar 1/2a (strain ATCC BAA-679 / EGD-e) protein is Glutamyl-tRNA(Gln) amidotransferase subunit A.